The following is a 506-amino-acid chain: Ribose import ATP-binding protein RbsA 2 (506 aa).

ABC transporter domains are found at residues 5 to 241 (LRLS…VGRR) and 251 to 498 (VRAA…TAGT). Position 37–44 (37–44 (GENGAGKS)) interacts with ATP.

Belongs to the ABC transporter superfamily. Ribose importer (TC 3.A.1.2.1) family. As to quaternary structure, the complex is composed of an ATP-binding protein (RbsA), two transmembrane proteins (RbsC) and a solute-binding protein (RbsB).

It is found in the cell inner membrane. The enzyme catalyses D-ribose(out) + ATP + H2O = D-ribose(in) + ADP + phosphate + H(+). Part of the ABC transporter complex RbsABC involved in ribose import. Responsible for energy coupling to the transport system. In Burkholderia ambifaria (strain ATCC BAA-244 / DSM 16087 / CCUG 44356 / LMG 19182 / AMMD) (Burkholderia cepacia (strain AMMD)), this protein is Ribose import ATP-binding protein RbsA 2.